The following is a 283-amino-acid chain: Undecaprenyl-diphosphatase (283 aa).

Helical transmembrane passes span 40–60 (GAAF…IYFF), 85–105 (AKMG…GLLF), 113–133 (LRSL…LTIA), 153–173 (IGWK…IPGS), 193–213 (AARF…VFQL), 227–247 (LIAI…SIAF), and 259–279 (VFII…ATGM).

The protein belongs to the UppP family.

Its subcellular location is the cell inner membrane. It carries out the reaction di-trans,octa-cis-undecaprenyl diphosphate + H2O = di-trans,octa-cis-undecaprenyl phosphate + phosphate + H(+). In terms of biological role, catalyzes the dephosphorylation of undecaprenyl diphosphate (UPP). Confers resistance to bacitracin. The protein is Undecaprenyl-diphosphatase of Chlorobium limicola (strain DSM 245 / NBRC 103803 / 6330).